The sequence spans 346 residues: uncharacterized protein (346 aa).

Residues 322-346 (GRDGGYRETTSPPTGRGRNVRGSHA) are disordered.

This is an uncharacterized protein from Mycobacterium tuberculosis (strain CDC 1551 / Oshkosh).